Consider the following 580-residue polypeptide: Adenine deaminase 2 (580 aa).

Belongs to the metallo-dependent hydrolases superfamily. Adenine deaminase family. Requires Mn(2+) as cofactor.

The catalysed reaction is adenine + H2O + H(+) = hypoxanthine + NH4(+). The chain is Adenine deaminase 2 from Latilactobacillus sakei subsp. sakei (strain 23K) (Lactobacillus sakei subsp. sakei).